Here is a 655-residue protein sequence, read N- to C-terminus: MDYTLTREESKLLMELLGLPMEQYGNFPLMRKAFLQKCKIMHPDKGGDEQTAKMLISLYKKLESEVKSLNTDDGFSTEEIPTYGSAEWEQWWQTFNEDFDLFCHETFTVSDDEEEGGEKRKHSDEEEPSCSQATPPKKKKTSSAPKDMPELLRNFLSNAILSNKTLTCFLVYTTLEKSSLLYSKLSEKFKPTFISRHKLDNEGLIFLITPSKHRVSAITNFCSNLCSVSFLIVKAVIKEYSCYCALCVEPFVLVVENIPGGLNSDFFDAPQEASKNVSWKLIGEYALSIMCDDLFLLLGLYKEFAVNPSTCSKCDQKVIVDHYKYHSLHYANAMLFTDCKNQKAICQQAVDGVLAFRRVQTAQLTRKQLLAKRFEYHFNKLEQVFSAKSEVCIETYMAGVCWFECLLPEVNMKNFILQYLECVVQNVPKKRFWCFTGPVNTGKTTLAAALLDLCGGKSLNVNMPFDKLNFELGVAIDQFTVVFEDVKGQSENKNLPTGQGISNLDNLRDYLDGAVKVNLEKKHLNKKTQIFPPGIVTANEYIFPLTLKVRFCKIIKFIYQQHLFKSLKKTELLTKHRVLQSGLTLLLLLVFHCDVEDFLSELHPLVTKWRENINHEVSWSRYLEMKENVMNGLNILEKQQDSGIFTQTQDTECQQ.

The residue at position 1 (methionine 1) is an N-acetylmethionine; by host. The J domain maps to 12 to 84; the sequence is LLMELLGLPM…FSTEEIPTYG (73 aa). The LXCXE motif signature appears at 101–105; sequence LFCHE. A Phosphoserine; by host modification is found at serine 110. Positions 110–145 are disordered; that stretch reads SDDEEEGGEKRKHSDEEEPSCSQATPPKKKKTSSAP. Threonine 134 carries the post-translational modification Phosphothreonine; by host. Positions 135-142 match the Nuclear localization signal motif; that stretch reads PPKKKKTS. Residues 149 to 264 constitute a DNA-binding region (T-ag OBD); it reads PELLRNFLSN…VENIPGGLNS (116 aa). Residues 274–366 form a T-ag D1-type zinc finger; it reads SKNVSWKLIG…RRVQTAQLTR (93 aa). Cysteine 311, cysteine 314, histidine 322, and histidine 326 together coordinate Zn(2+). An SF3 helicase domain is found at 411-570; the sequence is NMKNFILQYL…QHLFKSLKKT (160 aa). 437–444 provides a ligand contact to ATP; the sequence is GPVNTGKT.

As to quaternary structure, forms homohexamers in the presence of ATP. Interacts with host HDAC1. Interacts (via LXCXE domain) with host RB1; the interaction induces the aberrant dissociation of RB1-E2F1 complex thereby disrupting RB1's activity. Interacts (via LXCXE domain) with host pRB-related proteins RBL1 and RBL2. Interacts (via C-terminus) with host TOP1 and POLA1 allowing DNA replication. Interacts with host TP53, inhibiting TP53 binding to DNA. Interacts with host preinitiation complex components TBP, TFIIA and TFIID to regulate transcription initiation. Mg(2+) serves as cofactor. In terms of processing, phosphorylated on both serine and threonine residues. Small t antigen inhibits the dephosphorylation by the AC form of PP2A. Post-translationally, O-Glycosylated near the C-terminal region. Acetylated by CBP in a TP53-dependent manner.

The protein localises to the host nucleus. The catalysed reaction is Couples ATP hydrolysis with the unwinding of duplex DNA by translocating in the 3'-5' direction.. It catalyses the reaction ATP + H2O = ADP + phosphate + H(+). Isoform large T antigen is a key early protein essential for both driving viral replication and inducing cellular transformation. Plays a role in viral genome replication by driving entry of quiescent cells into the cell cycle and by autoregulating the synthesis of viral early mRNA. Displays highly oncogenic activities by corrupting the host cellular checkpoint mechanisms that guard cell division and the transcription, replication, and repair of DNA. Participates in the modulation of cellular gene expression preceeding viral DNA replication. This step involves binding to host key cell cycle regulators retinoblastoma protein RB1/pRb and TP53. Induces the disassembly of host E2F1 transcription factors from RB1, thus promoting transcriptional activation of E2F1-regulated S-phase genes. Inhibits host TP53 binding to DNA, abrogating the ability of TP53 to stimulate gene expression. Plays the role of a TFIID-associated factor (TAF) in transcription initiation for all three RNA polymerases, by stabilizing the TBP-TFIIA complex on promoters. Initiates viral DNA replication and unwinding via interactions with the viral origin of replication. Binds two adjacent sites in the SV40 origin. The replication fork movement is facilitated by Large T antigen helicase activity. Has processive 3'-5' DNA helicase activity which requires a short 3' single-stranded region and ATP. Activates the transcription of viral late mRNA, through host TBP and TFIIA stabilization. Interferes with histone deacetylation mediated by HDAC1, leading to activation of transcription. The protein is Large T antigen (large T) of Saimiri boliviensis boliviensis (Bolivian squirrel monkey).